Consider the following 290-residue polypeptide: MTSIAVIGPGAVGGTLAAWLAQKPDHVVTVCVRTPFEALAVETPEGAISATPRVATSPESLAPVDWVLVTTKTYDTDATWTWLDALVGPQTRVAILRNGVEHVAPFVGKIAAERLVPAVVDIPAERSAPGRMLQRRNGWIKVPVGPAGEAFAALFAHTPIELHVVEDFVTEAWKKLALNCAGAVNALVLKPAGIAHDEGAAQVMRSLVRECVAVGRAEGADLSDDLPDQVIAGYRAADPGSVNSLHADRAAGRAMELDARNGVIVRRGAAHGIATPANAMVVALLNAAAL.

Residues 8 to 13, Asn98, and Ala124 contribute to the NADP(+) site; that span reads GPGAVG. Asn98 provides a ligand contact to substrate. Lys175 (proton donor) is an active-site residue. The substrate site is built by Asn179 and Ser244. Glu256 provides a ligand contact to NADP(+).

Belongs to the ketopantoate reductase family.

Its subcellular location is the cytoplasm. The catalysed reaction is (R)-pantoate + NADP(+) = 2-dehydropantoate + NADPH + H(+). It functions in the pathway cofactor biosynthesis; (R)-pantothenate biosynthesis; (R)-pantoate from 3-methyl-2-oxobutanoate: step 2/2. Functionally, catalyzes the NADPH-dependent reduction of ketopantoate into pantoic acid. This chain is 2-dehydropantoate 2-reductase, found in Caulobacter vibrioides (strain ATCC 19089 / CIP 103742 / CB 15) (Caulobacter crescentus).